Here is a 247-residue protein sequence, read N- to C-terminus: tRNA (guanine-N(1)-)-methyltransferase (247 aa).

S-adenosyl-L-methionine is bound by residues G112 and 132-137; that span reads IGDFVL.

Belongs to the RNA methyltransferase TrmD family. In terms of assembly, homodimer.

It localises to the cytoplasm. The enzyme catalyses guanosine(37) in tRNA + S-adenosyl-L-methionine = N(1)-methylguanosine(37) in tRNA + S-adenosyl-L-homocysteine + H(+). Specifically methylates guanosine-37 in various tRNAs. This Geotalea uraniireducens (strain Rf4) (Geobacter uraniireducens) protein is tRNA (guanine-N(1)-)-methyltransferase.